Here is a 442-residue protein sequence, read N- to C-terminus: MENAKMNSLIAQYPLVEDLVALKETTWFNPGTTSLAEGLPYVGLTEQDVQDAHARLSRFAPYLAKAFPETAAAGGIIESELVAIPAMQKRLEKEYQQPIAGQLLLKKDSHLPISGSIKARGGIYEVLAHAEKLALEAGLLTLEDDYSKLLSPEFKQFFSQYSIAVGSTGNLGLSIGIMSARIGFKVTVHMSADARAWKKAKLRSHGVTVVEYEQDYGVAVEEGRKAAQSDPNCFFIDDENSRTLFLGYSVAGQRLKAQFAQQGRIVDADNPLFVYLPCGVGGGPGGVAFGLKLAFGDHVHCFFAEPTHSPCMLLGVHTGLHDQISVQDIGIDNLTAADGLAVGRASGFVGRAMERLLDGFYTLSDQTMYDMLGWLAQEEGIRLEPSALAGMAGSQRVCASVSYQQMHGFSAEQLRNATHLVWATGGGMVPEEEMNQYLAKGR.

K118 bears the N6-(pyridoxal phosphate)lysine mark.

The protein belongs to the serine/threonine dehydratase family. DsdA subfamily. As to quaternary structure, monomer. Requires pyridoxal 5'-phosphate as cofactor.

It carries out the reaction D-serine = pyruvate + NH4(+). The sequence is that of D-serine dehydratase from Escherichia coli O6:H1 (strain CFT073 / ATCC 700928 / UPEC).